The following is a 95-amino-acid chain: Large ribosomal subunit protein bL25 (95 aa).

It belongs to the bacterial ribosomal protein bL25 family. Part of the 50S ribosomal subunit; part of the 5S rRNA/L5/L18/L25 subcomplex. Contacts the 5S rRNA. Binds to the 5S rRNA independently of L5 and L18.

In terms of biological role, this is one of the proteins that binds to the 5S RNA in the ribosome where it forms part of the central protuberance. The polypeptide is Large ribosomal subunit protein bL25 (Shewanella loihica (strain ATCC BAA-1088 / PV-4)).